Consider the following 1058-residue polypeptide: Isoleucine--tRNA ligase (1058 aa).

A 'HIGH' region motif is present at residues 48–58; it reads PYTTGHIHLGT. The 'KMSKS' region motif lies at 596–600; it reads KMSKS. Residue Lys-599 participates in ATP binding.

The protein belongs to the class-I aminoacyl-tRNA synthetase family. IleS type 2 subfamily. As to quaternary structure, monomer. Zn(2+) serves as cofactor.

The protein localises to the cytoplasm. It carries out the reaction tRNA(Ile) + L-isoleucine + ATP = L-isoleucyl-tRNA(Ile) + AMP + diphosphate. In terms of biological role, catalyzes the attachment of isoleucine to tRNA(Ile). As IleRS can inadvertently accommodate and process structurally similar amino acids such as valine, to avoid such errors it has two additional distinct tRNA(Ile)-dependent editing activities. One activity is designated as 'pretransfer' editing and involves the hydrolysis of activated Val-AMP. The other activity is designated 'posttransfer' editing and involves deacylation of mischarged Val-tRNA(Ile). The chain is Isoleucine--tRNA ligase from Methanosarcina barkeri (strain Fusaro / DSM 804).